The chain runs to 67 residues: Sec-independent protein translocase protein TatA (67 aa).

A helical transmembrane segment spans residues 1-21 (MGSFSLTHWIIVLIIVVLIFG). Residues 43-67 (LNEGTDGKEAQKDDVIEHKKDEDKA) form a disordered region. Basic and acidic residues predominate over residues 47-67 (TDGKEAQKDDVIEHKKDEDKA).

The protein belongs to the TatA/E family. As to quaternary structure, the Tat system comprises two distinct complexes: a TatABC complex, containing multiple copies of TatA, TatB and TatC subunits, and a separate TatA complex, containing only TatA subunits. Substrates initially bind to the TatABC complex, which probably triggers association of the separate TatA complex to form the active translocon.

The protein resides in the cell inner membrane. Its function is as follows. Part of the twin-arginine translocation (Tat) system that transports large folded proteins containing a characteristic twin-arginine motif in their signal peptide across membranes. TatA could form the protein-conducting channel of the Tat system. The chain is Sec-independent protein translocase protein TatA from Neisseria gonorrhoeae (strain ATCC 700825 / FA 1090).